Here is a 192-residue protein sequence, read N- to C-terminus: Protein GrpE (192 aa).

Basic and acidic residues predominate over residues 1–20 (MEERNEQVVEEVKEEVKEAQ). The disordered stretch occupies residues 1-39 (MEERNEQVVEEVKEEVKEAQVEEAVTSEDSEESVEEKSE). Residues 25–34 (VTSEDSEESV) are compositionally biased toward acidic residues.

This sequence belongs to the GrpE family. As to quaternary structure, homodimer.

It localises to the cytoplasm. Functionally, participates actively in the response to hyperosmotic and heat shock by preventing the aggregation of stress-denatured proteins, in association with DnaK and GrpE. It is the nucleotide exchange factor for DnaK and may function as a thermosensor. Unfolded proteins bind initially to DnaJ; upon interaction with the DnaJ-bound protein, DnaK hydrolyzes its bound ATP, resulting in the formation of a stable complex. GrpE releases ADP from DnaK; ATP binding to DnaK triggers the release of the substrate protein, thus completing the reaction cycle. Several rounds of ATP-dependent interactions between DnaJ, DnaK and GrpE are required for fully efficient folding. This is Protein GrpE from Bacillus cereus (strain ATCC 10987 / NRS 248).